Here is an 800-residue protein sequence, read N- to C-terminus: Internalin A (800 aa).

The first 35 residues, 1 to 35 (MRKKRYVWLKSILVAILVFGSGVWINTSNGTNAQA), serve as a signal peptide directing secretion. Positions 36 to 76 (ATITQDTPINQIFTDAALAEKMKTVLGKTNVTDTVSQTDLD) constitute an LRRNT domain. LRR repeat units lie at residues 77–98 (QVTT…EYLN), 99–120 (NLTQ…KDLT), 121–142 (KLVD…ANLT), 143–164 (NLTG…KNLT), 165–186 (NLNR…SGLT), 187–207 (NLQQ…ANLT), 208–229 (TLER…AKLT), 230–251 (NLES…GILT), 252–273 (NLDE…ASLT), 274–295 (NLTD…SGLT), 296–317 (KLTE…AGLT), 318–339 (ALTN…SNLK), 340–361 (NLTY…SSLT), 362–383 (KLQR…ANLT), and 384–405 (NINW…ANLT). Residues 416–505 (AWTNAPVNYK…AIFNAKFHVD (90 aa)) form the LRRCT domain. The B-1 repeat unit spans residues 518–587 (LLTEPAKPVK…TTSQTVDYQG (70 aa)). The 3 X approximate tandem repeats, type B stretch occupies residues 518–706 (LLTEPAKPVK…ITLYAQFTKN (189 aa)). A B-2 repeat occupies 588 to 657 (LLQEPTPPTK…STTQAVDYQG (70 aa)). Residues 658 to 706 (LLKEPKAPTKAGYTFKGWYDEKTDGKKWDFATDKMPANDITLYAQFTKN) form a B-3 repeat. The tract at residues 705-757 (KNPVAPPTTGGNTPPTTNNGGNTTPPSANIPGSDTSNTSTGNSASTTSTMNAY) is disordered. A compositionally biased stretch (low complexity) spans 711 to 753 (PTTGGNTPPTTNNGGNTTPPSANIPGSDTSNTSTGNSASTTST). The LPXTG sorting signal motif lies at 767–771 (LPTTG). Thr770 is subject to Pentaglycyl murein peptidoglycan amidated threonine. The propeptide at 771-800 (GDSDNALYLLLGLLAVGTAMALTKKARASK) is removed by sortase A.

The protein belongs to the internalin family.

Its subcellular location is the secreted. The protein resides in the cell wall. Its function is as follows. Mediates the entry of Listeria monocytogenes into cells. Binds to host receptor cadherin-1 (E-cadherin, CDH1). The chain is Internalin A (inlA) from Listeria monocytogenes serotype 1/2a (strain 10403S).